Here is a 378-residue protein sequence, read N- to C-terminus: Queuine tRNA-ribosyltransferase (378 aa).

D91 acts as the Proton acceptor in catalysis. Residues 91–95 (DSGGF), D145, Q197, and G224 each bind substrate. Catalysis depends on D274, which acts as the Nucleophile. The tract at residues 279 to 283 (TRLAR) is RNA binding; important for wobble base 34 recognition. Positions 312, 314, 317, and 343 each coordinate Zn(2+).

It belongs to the queuine tRNA-ribosyltransferase family. In terms of assembly, homodimer. Within each dimer, one monomer is responsible for RNA recognition and catalysis, while the other monomer binds to the replacement base PreQ1. Zn(2+) is required as a cofactor.

The enzyme catalyses 7-aminomethyl-7-carbaguanine + guanosine(34) in tRNA = 7-aminomethyl-7-carbaguanosine(34) in tRNA + guanine. It participates in tRNA modification; tRNA-queuosine biosynthesis. Catalyzes the base-exchange of a guanine (G) residue with the queuine precursor 7-aminomethyl-7-deazaguanine (PreQ1) at position 34 (anticodon wobble position) in tRNAs with GU(N) anticodons (tRNA-Asp, -Asn, -His and -Tyr). Catalysis occurs through a double-displacement mechanism. The nucleophile active site attacks the C1' of nucleotide 34 to detach the guanine base from the RNA, forming a covalent enzyme-RNA intermediate. The proton acceptor active site deprotonates the incoming PreQ1, allowing a nucleophilic attack on the C1' of the ribose to form the product. After dissociation, two additional enzymatic reactions on the tRNA convert PreQ1 to queuine (Q), resulting in the hypermodified nucleoside queuosine (7-(((4,5-cis-dihydroxy-2-cyclopenten-1-yl)amino)methyl)-7-deazaguanosine). This is Queuine tRNA-ribosyltransferase from Methylacidiphilum infernorum (isolate V4) (Methylokorus infernorum (strain V4)).